Reading from the N-terminus, the 305-residue chain is MSKKLTFQEIILTLQQFWNEQGCLLMQAYDTEKGAGTMSPYTFLRAIGPEPWNAAYVEPSRRPADGRYGENPNRLYQHHQFQVVMKPSPSNIQELYLESLERLGINPLEHDIRFVEDNWENPSTGSAGLGWEVWLDGMEITQFTYFQQVGGLATGPVTAEVTYGLERLASYIQEVDSVYDIEWADGVKYGEIFIQPEYEHSKYSFEVSDQDMLLENFTKFEKEAERALEEGLVHPAFDYVLKCSHTFNLLDARGAVSVTERAGYIARIRNLARVVAKTFVAERKKLGFPLLDEATRAELLKEDAE.

It belongs to the class-II aminoacyl-tRNA synthetase family. Tetramer of two alpha and two beta subunits.

It localises to the cytoplasm. It carries out the reaction tRNA(Gly) + glycine + ATP = glycyl-tRNA(Gly) + AMP + diphosphate. This Streptococcus suis (strain 98HAH33) protein is Glycine--tRNA ligase alpha subunit.